A 93-amino-acid chain; its full sequence is Consomatin G2 (93 aa).

Residues 1–18 form the signal peptide; the sequence is MQTAYWVMLMMMVCITAP. Positions 19-69 are excised as a propeptide; sequence LPEGGKPNSGIRGLVPNDLTPQHTLRSLISRRQTDVLLDATLLTTPAPEQR. Cys-72 and Cys-77 form a disulfide bridge. Trp-74 carries the D-tryptophan modification. Positions 79-93 are excised as a propeptide; it reads WRPYPWRRRDLNGKR.

This sequence belongs to the conotoxin C superfamily. Consomatin family. In terms of tissue distribution, expressed by the venom duct.

It localises to the secreted. Functionally, moderately activates human somatostatin receptors (SSTR) with a preferential activation of SSTR1 and SSTR4. In vivo, does not cause behavioral changes in mice within a few minutes of intracranial injection, but causes a progressive loss of movement thereafter. Four to five hours after injection, mice recover, even with the highest dose tested. Shows antinociception and antihyperalgesia activities in two mouse models of acute pain, most probably by acting outside the central nervous system. The protein is Consomatin G2 of Conus geographus (Geography cone).